Consider the following 217-residue polypeptide: Probable disulfide bond formation protein D (217 aa).

The signal sequence occupies residues 1-28 (MKSSNKLMALGIVFSIAVLIVIGTIVYS). Residues C66 and C69 are joined by a disulfide bond.

Belongs to the thioredoxin family. DsbA subfamily.

May be required for disulfide bond formation in some proteins. This is Probable disulfide bond formation protein D (bdbD) from Bacillus anthracis.